The following is a 242-amino-acid chain: Pyridoxine 5'-phosphate synthase (242 aa).

3-amino-2-oxopropyl phosphate is bound at residue Asn-9. Residue 11 to 12 (DH) coordinates 1-deoxy-D-xylulose 5-phosphate. Position 20 (Arg-20) interacts with 3-amino-2-oxopropyl phosphate. The Proton acceptor role is filled by His-45. 1-deoxy-D-xylulose 5-phosphate is bound by residues Arg-47 and His-52. The active-site Proton acceptor is Glu-72. Thr-102 contacts 1-deoxy-D-xylulose 5-phosphate. The active-site Proton donor is His-193. Residues Gly-194 and 215–216 (GH) contribute to the 3-amino-2-oxopropyl phosphate site.

The protein belongs to the PNP synthase family. As to quaternary structure, homooctamer; tetramer of dimers.

Its subcellular location is the cytoplasm. The enzyme catalyses 3-amino-2-oxopropyl phosphate + 1-deoxy-D-xylulose 5-phosphate = pyridoxine 5'-phosphate + phosphate + 2 H2O + H(+). The protein operates within cofactor biosynthesis; pyridoxine 5'-phosphate biosynthesis; pyridoxine 5'-phosphate from D-erythrose 4-phosphate: step 5/5. Catalyzes the complicated ring closure reaction between the two acyclic compounds 1-deoxy-D-xylulose-5-phosphate (DXP) and 3-amino-2-oxopropyl phosphate (1-amino-acetone-3-phosphate or AAP) to form pyridoxine 5'-phosphate (PNP) and inorganic phosphate. The chain is Pyridoxine 5'-phosphate synthase from Idiomarina loihiensis (strain ATCC BAA-735 / DSM 15497 / L2-TR).